We begin with the raw amino-acid sequence, 1212 residues long: DNA-directed RNA polymerase subunit beta (1212 aa).

Residues 1176–1195 show a composition bias toward basic and acidic residues; it reads QQEKKKLAEEAAKKDDKSAE. Positions 1176-1212 are disordered; sequence QQEKKKLAEEAAKKDDKSAEPVDQSDSSTSSDDKVSK.

Belongs to the RNA polymerase beta chain family. In terms of assembly, the RNAP catalytic core consists of 2 alpha, 1 beta, 1 beta' and 1 omega subunit. When a sigma factor is associated with the core the holoenzyme is formed, which can initiate transcription.

It catalyses the reaction RNA(n) + a ribonucleoside 5'-triphosphate = RNA(n+1) + diphosphate. Functionally, DNA-dependent RNA polymerase catalyzes the transcription of DNA into RNA using the four ribonucleoside triphosphates as substrates. The sequence is that of DNA-directed RNA polymerase subunit beta from Lactobacillus gasseri (strain ATCC 33323 / DSM 20243 / BCRC 14619 / CIP 102991 / JCM 1131 / KCTC 3163 / NCIMB 11718 / NCTC 13722 / AM63).